The following is a 359-amino-acid chain: Histidinol-phosphate aminotransferase (359 aa).

Lys217 bears the N6-(pyridoxal phosphate)lysine mark.

It belongs to the class-II pyridoxal-phosphate-dependent aminotransferase family. Histidinol-phosphate aminotransferase subfamily. Homodimer. The cofactor is pyridoxal 5'-phosphate.

It carries out the reaction L-histidinol phosphate + 2-oxoglutarate = 3-(imidazol-4-yl)-2-oxopropyl phosphate + L-glutamate. It functions in the pathway amino-acid biosynthesis; L-histidine biosynthesis; L-histidine from 5-phospho-alpha-D-ribose 1-diphosphate: step 7/9. The protein is Histidinol-phosphate aminotransferase (hisC) of Salmonella typhimurium (strain LT2 / SGSC1412 / ATCC 700720).